Here is a 477-residue protein sequence, read N- to C-terminus: Stromelysin-1 (477 aa).

An N-terminal signal peptide occupies residues 1–17 (MKGLPVLLWLCVVVCSS). The propeptide at 18–99 (YPLHDSARDD…PRCGVPDVGG (82 aa)) is activation peptide. Positions 90-97 (PRCGVPDV) match the Cysteine switch motif. Position 92 (Cys-92) interacts with Zn(2+). Asp-124 and Asp-158 together coordinate Ca(2+). His-168 and Asp-170 together coordinate Zn(2+). 4 residues coordinate Ca(2+): Asp-175, Gly-176, Gly-178, and Val-180. A Zn(2+)-binding site is contributed by His-183. Ca(2+) is bound by residues Gly-190, Asn-192, and Asp-194. His-196 is a Zn(2+) binding site. Ca(2+) is bound by residues Asp-198, Asp-199, and Glu-201. A Zn(2+)-binding site is contributed by His-218. Glu-219 is an active-site residue. The Zn(2+) site is built by His-222 and His-228. Hemopexin repeat units follow at residues 287–336 (SPMC…WPSL), 337–383 (PSNM…GLPA), 385–433 (VKKI…FPGV), and 434–477 (DSRV…WFNC). A disulfide bridge connects residues Cys-290 and Cys-477. Asp-297 provides a ligand contact to Ca(2+). The Ca(2+) site is built by Asp-389 and Asp-438.

The protein belongs to the peptidase M10A family. Requires Ca(2+) as cofactor. The cofactor is Zn(2+).

It is found in the secreted. The protein resides in the extracellular space. Its subcellular location is the extracellular matrix. The catalysed reaction is Preferential cleavage where P1', P2' and P3' are hydrophobic residues.. Functionally, metalloproteinase with a rather broad substrate specificity that can degrade fibronectin, laminin, gelatins of type I, III, IV, and V; collagens III, IV, X, and IX, and cartilage proteoglycans. Activates different molecules including growth factors, plasminogen or other matrix metalloproteinases such as MMP9. Once released into the extracellular matrix (ECM), the inactive pro-enzyme is activated by the plasmin cascade signaling pathway. Also acts intracellularly. For example, in dopaminergic neurons, gets activated by the serine protease HTRA2 upon stress and plays a pivotal role in DA neuronal degeneration by mediating microglial activation and alpha-synuclein/SNCA cleavage. In addition, plays a role in immune response and possesses antiviral activity against various viruses. Mechanistically, translocates from the cytoplasm into the cell nucleus upon virus infection to influence NF-kappa-B activities. This Mus musculus (Mouse) protein is Stromelysin-1 (Mmp3).